A 736-amino-acid chain; its full sequence is Zinc finger CCCH domain-containing protein 14 (736 aa).

Met1 is modified (N-acetylmethionine). Positions Thr77–Ser103 are enriched in polar residues. The segment at Thr77–Thr153 is disordered. A Phosphoserine modification is found at Ser85. Glycyl lysine isopeptide (Lys-Gly) (interchain with G-Cter in SUMO2) cross-links involve residues Lys99, Lys139, Lys175, and Lys198. The span at Arg123 to Asp148 shows a compositional bias: basic and acidic residues. Ser240 carries the phosphoserine modification. Glycyl lysine isopeptide (Lys-Gly) (interchain with G-Cter in SUMO2) cross-links involve residues Lys245, Lys283, and Lys295. A disordered region spans residues Phe308–Ala350. Residues Ser309, Ser327, and Ser343 each carry the phosphoserine modification. Lys357 is modified (N6-acetyllysine; alternate). Residue Lys357 forms a Glycyl lysine isopeptide (Lys-Gly) (interchain with G-Cter in SUMO2); alternate linkage. The segment covering Thr367–Thr380 has biased composition (polar residues). The segment at Thr367–Arg386 is disordered. Lys378 participates in a covalent cross-link: Glycyl lysine isopeptide (Lys-Gly) (interchain with G-Cter in SUMO2). Residues Ser390 and Ser409 each carry the phosphoserine modification. The segment at Gln400–Asp420 is disordered. Residues Lys413 and Lys489 each participate in a glycyl lysine isopeptide (Lys-Gly) (interchain with G-Cter in SUMO2) cross-link. A phosphoserine mark is found at Ser498, Ser515, Ser527, and Ser620. 5 C3H1-type zinc fingers span residues Glu595–Ser620, Pro621–Asn640, Cys641–His656, Cys682–Lys699, and Cys701–Ile719.

It belongs to the ZC3H14 family. Homodimer; facilitating circular RNAs (circRNAs) formation. Associates with the spliceosome. Interacts with HOOK2. Interacts with ZFC3H1 in a RNase-sensitive manner.

The protein localises to the nucleus speckle. Its function is as follows. RNA-binding protein involved in the biogenesis of circular RNAs (circRNAs), which are produced by back-splicing circularization of pre-mRNAs. Acts by binding to both exon-intron boundary and 3'-UTR of pre-mRNAs to promote circRNA biogenesis through dimerization and the association with the spliceosome. Required for spermatogenesis via involvement in circRNA biogenesis. Regulates the pre-mRNA processing of ATP5MC1; preventing its degradation. Also binds the poly(A) tail of mRNAs; controlling poly(A) length in neuronal cells. This is Zinc finger CCCH domain-containing protein 14 from Rattus norvegicus (Rat).